The sequence spans 284 residues: NAD kinase (284 aa).

The Proton acceptor role is filled by aspartate 61. NAD(+)-binding positions include 61–62 (DG), arginine 66, 136–137 (ND), arginine 147, lysine 164, aspartate 166, and leucine 201.

It belongs to the NAD kinase family. A divalent metal cation serves as cofactor.

The protein localises to the cytoplasm. The enzyme catalyses NAD(+) + ATP = ADP + NADP(+) + H(+). In terms of biological role, involved in the regulation of the intracellular balance of NAD and NADP, and is a key enzyme in the biosynthesis of NADP. Catalyzes specifically the phosphorylation on 2'-hydroxyl of the adenosine moiety of NAD to yield NADP. The sequence is that of NAD kinase from Dehalococcoides mccartyi (strain CBDB1).